The following is a 172-amino-acid chain: Ribosome maturation factor RimM (172 aa).

A PRC barrel domain is found at 98–171 (PGEYYYHQIV…KVIVELMEGL (74 aa)).

This sequence belongs to the RimM family. In terms of assembly, binds ribosomal protein uS19.

The protein localises to the cytoplasm. Its function is as follows. An accessory protein needed during the final step in the assembly of 30S ribosomal subunit, possibly for assembly of the head region. Essential for efficient processing of 16S rRNA. May be needed both before and after RbfA during the maturation of 16S rRNA. It has affinity for free ribosomal 30S subunits but not for 70S ribosomes. In Levilactobacillus brevis (strain ATCC 367 / BCRC 12310 / CIP 105137 / JCM 1170 / LMG 11437 / NCIMB 947 / NCTC 947) (Lactobacillus brevis), this protein is Ribosome maturation factor RimM.